The sequence spans 606 residues: Elongation factor 4 (606 aa).

Positions 11–193 constitute a tr-type G domain; that stretch reads PHIRNFSIIA…RLVRDVPPPK (183 aa). Residues 23–28 and 140–143 contribute to the GTP site; these read DHGKST and NKMD.

The protein belongs to the TRAFAC class translation factor GTPase superfamily. Classic translation factor GTPase family. LepA subfamily.

Its subcellular location is the cell inner membrane. The catalysed reaction is GTP + H2O = GDP + phosphate + H(+). Functionally, required for accurate and efficient protein synthesis under certain stress conditions. May act as a fidelity factor of the translation reaction, by catalyzing a one-codon backward translocation of tRNAs on improperly translocated ribosomes. Back-translocation proceeds from a post-translocation (POST) complex to a pre-translocation (PRE) complex, thus giving elongation factor G a second chance to translocate the tRNAs correctly. Binds to ribosomes in a GTP-dependent manner. The chain is Elongation factor 4 from Chromohalobacter salexigens (strain ATCC BAA-138 / DSM 3043 / CIP 106854 / NCIMB 13768 / 1H11).